Reading from the N-terminus, the 266-residue chain is Hydroxyethylthiazole kinase (266 aa).

Met-45 lines the substrate pocket. Positions 121 and 167 each coordinate ATP. Gly-194 provides a ligand contact to substrate.

This sequence belongs to the Thz kinase family. Mg(2+) is required as a cofactor.

It carries out the reaction 5-(2-hydroxyethyl)-4-methylthiazole + ATP = 4-methyl-5-(2-phosphooxyethyl)-thiazole + ADP + H(+). The protein operates within cofactor biosynthesis; thiamine diphosphate biosynthesis; 4-methyl-5-(2-phosphoethyl)-thiazole from 5-(2-hydroxyethyl)-4-methylthiazole: step 1/1. Catalyzes the phosphorylation of the hydroxyl group of 4-methyl-5-beta-hydroxyethylthiazole (THZ). The protein is Hydroxyethylthiazole kinase of Methanocella arvoryzae (strain DSM 22066 / NBRC 105507 / MRE50).